We begin with the raw amino-acid sequence, 410 residues long: Transcription factor E2F4 (410 aa).

The segment at 1 to 20 (MAEAGPQAPPPPGTPSRHEK) is disordered. Ala2 carries the post-translational modification N-acetylalanine. A DNA-binding region spans residues 16–85 (SRHEKSLGLL…KNSIQWKGVG (70 aa)). The leucine-zipper stretch occupies residues 43–65 (LKLAADTLAVRQKRRIYDITNVL). The DEF box signature appears at 48–85 (DTLAVRQKRRIYDITNVLEGIGLIEKKSKNSIQWKGVG). Positions 86–181 (PGCNTREIAD…GLNGQKKYQI (96 aa)) are dimerization. Disordered stretches follow at residues 203-258 (PPVA…GSTQ) and 303-341 (SALL…DPTG). 2 stretches are compositionally biased toward low complexity: residues 231 to 252 (PALA…TPTP) and 308 to 324 (SSSS…SSSS). Residues 334–410 (PIKADPTGVL…DLFDVPVLKL (77 aa)) form a transactivation region. Phosphoserine is present on Ser381. The HCFC1-binding-motif (HBM) motif lies at 386-389 (DHDY). An interaction with RBL1 and RBL2 region spans residues 387–404 (HDYIYNLDESEGVCDLFD).

It belongs to the E2F/DP family. As to quaternary structure, component of the DRTF1/E2F transcription factor complex. Binds cooperatively with TFDP1/Dp-1 to E2F sites. The E2F4/TFDP1 dimer interacts preferentially with pocket protein RBL1, which inhibits the E2F transactivation domain. Lower affinity interaction has been found with retinoblastoma protein RB1. Interacts with TRRAP, which probably mediates its interaction with histone acetyltransferase complexes, leading to transcription activation. Interacts with HCFC1. Component of the DREAM complex (also named LINC complex) at least composed of E2F4, E2F5, LIN9, LIN37, LIN52, LIN54, MYBL1, MYBL2, RBL1, RBL2, RBBP4, TFDP1 and TFDP2. The complex exists in quiescent cells where it represses cell cycle-dependent genes. It dissociates in S phase when LIN9, LIN37, LIN52 and LIN54 form a subcomplex that binds to MYBL2. Interacts with PML. Interacts with CEBPA (when phosphorylated). Post-translationally, differentially phosphorylated in vivo.

It localises to the nucleus. Functionally, transcription activator that binds DNA cooperatively with DP proteins through the E2 recognition site, 5'-TTTC[CG]CGC-3' found in the promoter region of a number of genes whose products are involved in cell cycle regulation or in DNA replication. The DRTF1/E2F complex functions in the control of cell-cycle progression from G1 to S phase. E2F4 binds with high affinity to RBL1 and RBL2. In some instances can also bind RB1. Specifically required for multiciliate cell differentiation: together with MCIDAS and E2F5, binds and activate genes required for centriole biogenesis. The sequence is that of Transcription factor E2F4 (E2f4) from Mus musculus (Mouse).